The sequence spans 209 residues: Uracil phosphoribosyltransferase (209 aa).

5-phospho-alpha-D-ribose 1-diphosphate contacts are provided by residues R79, R104, and 131-139; that span reads DPMLATGGS. Residues I194 and 199-201 contribute to the uracil site; that span reads GDA. D200 contributes to the 5-phospho-alpha-D-ribose 1-diphosphate binding site.

It belongs to the UPRTase family. Requires Mg(2+) as cofactor.

The enzyme catalyses UMP + diphosphate = 5-phospho-alpha-D-ribose 1-diphosphate + uracil. It participates in pyrimidine metabolism; UMP biosynthesis via salvage pathway; UMP from uracil: step 1/1. Allosterically activated by GTP. Its function is as follows. Catalyzes the conversion of uracil and 5-phospho-alpha-D-ribose 1-diphosphate (PRPP) to UMP and diphosphate. The chain is Uracil phosphoribosyltransferase from Brevibacillus brevis (strain 47 / JCM 6285 / NBRC 100599).